Here is a 552-residue protein sequence, read N- to C-terminus: MTSLREFRKLCCDIYHASGYKEKSKLIRDFITDRDDKYLIIKLLLPGLDDRIYNMNDKQIIKLYSIIFKQSQEDMLQDLGYGYIGDTIRTFFKENTEIRPRDKSILTLEEVDSFLTTLSSVTKESHQIKLLTDIASVCTCNDLKCVVMLIDKDLKIKAGPRYVLNAISPHAYDVFRKSNNLKEIIENASKQNLDSISISVMTPINPMLAESCDSVNKAFKKFPSGMFAEVKYDGERVQVHKNNNEFAFFSRNMKPVLSHKVDYLKEYIPKAFKKATSIVLDSEIVLVDEHNVPLPFGSLGIHKKKEYKNSNMCLFVFDCLYFDGFDMTDIPLYERRSFLKDVMVEIPNRIVFSELTNISNESQLTDVLDDALTRKLEGLVLKDINGVYEPGKRRWLKIKRDYLNEGSMADSADLVVLGAYYGKGAKGGIMAVFLMGCYDDESGKWKTVTKCSGHDDNTLRELQDQLKMIKINKDPKKIPEWLVVNKIYIPDFVVEDPKQSQIWEISGAEFTSSKSHTANGISIRFPRFTRIREDKTWKESTHLNDLVNLTKS.

E229 contributes to the ATP binding site. K231 (N6-AMP-lysine intermediate) is an active-site residue. ATP-binding residues include R236 and E283. Mg(2+)-binding residues include E283 and E377. K382 and K397 together coordinate ATP.

Belongs to the ATP-dependent DNA ligase family. In terms of assembly, interacts with host TOP2A and TOP2B. Mg(2+) is required as a cofactor.

It localises to the host cytoplasm. It catalyses the reaction ATP + (deoxyribonucleotide)n-3'-hydroxyl + 5'-phospho-(deoxyribonucleotide)m = (deoxyribonucleotide)n+m + AMP + diphosphate.. Its function is as follows. DNA ligase that seals nicks in double-stranded DNA during DNA replication, DNA recombination and DNA repair. Recruits cellular topoisomerase II to sites of viral replication and assembly. This is DNA ligase (OPG180) from Vaccinia virus (strain Ankara) (VACV).